Here is a 241-residue protein sequence, read N- to C-terminus: Biosynthetic peptidoglycan transglycosylase (241 aa).

Residues 18 to 38 (GVIGIIALWMAGILIFAFLPV) form a helical membrane-spanning segment.

It belongs to the glycosyltransferase 51 family.

The protein localises to the cell inner membrane. The catalysed reaction is [GlcNAc-(1-&gt;4)-Mur2Ac(oyl-L-Ala-gamma-D-Glu-L-Lys-D-Ala-D-Ala)](n)-di-trans,octa-cis-undecaprenyl diphosphate + beta-D-GlcNAc-(1-&gt;4)-Mur2Ac(oyl-L-Ala-gamma-D-Glu-L-Lys-D-Ala-D-Ala)-di-trans,octa-cis-undecaprenyl diphosphate = [GlcNAc-(1-&gt;4)-Mur2Ac(oyl-L-Ala-gamma-D-Glu-L-Lys-D-Ala-D-Ala)](n+1)-di-trans,octa-cis-undecaprenyl diphosphate + di-trans,octa-cis-undecaprenyl diphosphate + H(+). It functions in the pathway cell wall biogenesis; peptidoglycan biosynthesis. Peptidoglycan polymerase that catalyzes glycan chain elongation from lipid-linked precursors. This chain is Biosynthetic peptidoglycan transglycosylase, found in Yersinia pseudotuberculosis serotype O:1b (strain IP 31758).